The sequence spans 361 residues: Phosphoserine aminotransferase (361 aa).

R43 contacts L-glutamate. Residues 77-78 (AS), W103, T153, D173, and Q196 each bind pyridoxal 5'-phosphate. Residue K197 is modified to N6-(pyridoxal phosphate)lysine. Position 238-239 (238-239 (NT)) interacts with pyridoxal 5'-phosphate.

Belongs to the class-V pyridoxal-phosphate-dependent aminotransferase family. SerC subfamily. In terms of assembly, homodimer. Pyridoxal 5'-phosphate serves as cofactor.

The protein resides in the cytoplasm. It carries out the reaction O-phospho-L-serine + 2-oxoglutarate = 3-phosphooxypyruvate + L-glutamate. The enzyme catalyses 4-(phosphooxy)-L-threonine + 2-oxoglutarate = (R)-3-hydroxy-2-oxo-4-phosphooxybutanoate + L-glutamate. Its pathway is amino-acid biosynthesis; L-serine biosynthesis; L-serine from 3-phospho-D-glycerate: step 2/3. The protein operates within cofactor biosynthesis; pyridoxine 5'-phosphate biosynthesis; pyridoxine 5'-phosphate from D-erythrose 4-phosphate: step 3/5. Its function is as follows. Catalyzes the reversible conversion of 3-phosphohydroxypyruvate to phosphoserine and of 3-hydroxy-2-oxo-4-phosphonooxybutanoate to phosphohydroxythreonine. In Pseudomonas aeruginosa (strain LESB58), this protein is Phosphoserine aminotransferase.